The following is a 147-amino-acid chain: Fluoride-specific ion channel FluC 1 (147 aa).

Helical transmembrane passes span 29–49 (YVYI…ISFL), 61–81 (IANL…IAFF), 90–110 (AITT…LELI), and 118–138 (FITL…LCYV). The Na(+) site is built by Gly97 and Thr100.

It belongs to the fluoride channel Fluc/FEX (TC 1.A.43) family.

The protein localises to the cell membrane. The catalysed reaction is fluoride(in) = fluoride(out). Its activity is regulated as follows. Na(+) is not transported, but it plays an essential structural role and its presence is essential for fluoride channel function. Functionally, fluoride-specific ion channel. Important for reducing fluoride concentration in the cell, thus reducing its toxicity. The sequence is that of Fluoride-specific ion channel FluC 1 from Staphylococcus aureus (strain MRSA252).